We begin with the raw amino-acid sequence, 235 residues long: uncharacterized protein (235 aa).

Disordered regions lie at residues 20-64 and 140-164; these read IHPN…LPIK and SQFF…NFDQ. Low complexity-rich tracts occupy residues 30–60 and 140–161; these read NNNN…SNNN and SQFF…NNKN. Residues 174 to 213 are a coiled coil; the sequence is KYMEFLSDIEQLNSDLKESKDNLESISIEMVLLETRLKGL.

This is an uncharacterized protein from Dictyostelium discoideum (Social amoeba).